A 70-amino-acid chain; its full sequence is ATP synthase subunit c (70 aa).

2 helical membrane passes run 4 to 24 (IAAA…NGLI) and 49 to 69 (GIAL…LAFF).

The protein belongs to the ATPase C chain family. As to quaternary structure, F-type ATPases have 2 components, F(1) - the catalytic core - and F(0) - the membrane proton channel. F(1) has five subunits: alpha(3), beta(3), gamma(1), delta(1), epsilon(1). F(0) has three main subunits: a(1), b(2) and c(10-14). The alpha and beta chains form an alternating ring which encloses part of the gamma chain. F(1) is attached to F(0) by a central stalk formed by the gamma and epsilon chains, while a peripheral stalk is formed by the delta and b chains. The F(1)F(0) complex interacts with SpoIIIJ and YqjG; YqgA is found in the same complex.

Its subcellular location is the cell membrane. Its function is as follows. F(1)F(0) ATP synthase produces ATP from ADP in the presence of a proton or sodium gradient. F-type ATPases consist of two structural domains, F(1) containing the extramembraneous catalytic core and F(0) containing the membrane proton channel, linked together by a central stalk and a peripheral stalk. During catalysis, ATP synthesis in the catalytic domain of F(1) is coupled via a rotary mechanism of the central stalk subunits to proton translocation. Functionally, key component of the F(0) channel; it plays a direct role in translocation across the membrane. A homomeric c-ring of between 10-14 subunits forms the central stalk rotor element with the F(1) delta and epsilon subunits. This is ATP synthase subunit c from Bacillus subtilis (strain 168).